We begin with the raw amino-acid sequence, 490 residues long: Betaine aldehyde dehydrogenase (490 aa).

K(+)-binding residues include Thr-26, Ile-27, and Asp-93. 150–152 is an NAD(+) binding site; it reads GAW. Catalysis depends on Lys-162, which acts as the Charge relay system. An NAD(+)-binding site is contributed by 176 to 179; sequence KPSE. Val-180 serves as a coordination point for K(+). Residue 230–233 participates in NAD(+) binding; that stretch reads GVAS. K(+) is bound at residue Leu-246. Glu-252 functions as the Proton acceptor in the catalytic mechanism. NAD(+) contacts are provided by Gly-254, Cys-286, and Glu-387. Cys-286 acts as the Nucleophile in catalysis. A Cysteine sulfenic acid (-SOH) modification is found at Cys-286. Positions 457 and 460 each coordinate K(+). Glu-464 serves as the catalytic Charge relay system.

This sequence belongs to the aldehyde dehydrogenase family. In terms of assembly, dimer of dimers. It depends on K(+) as a cofactor.

It catalyses the reaction betaine aldehyde + NAD(+) + H2O = glycine betaine + NADH + 2 H(+). It functions in the pathway amine and polyamine biosynthesis; betaine biosynthesis via choline pathway; betaine from betaine aldehyde: step 1/1. Involved in the biosynthesis of the osmoprotectant glycine betaine. Catalyzes the irreversible oxidation of betaine aldehyde to the corresponding acid. The polypeptide is Betaine aldehyde dehydrogenase (Escherichia coli (strain SE11)).